We begin with the raw amino-acid sequence, 327 residues long: Phenylalanine--tRNA ligase alpha subunit (327 aa).

Glu252 is a binding site for Mg(2+).

The protein belongs to the class-II aminoacyl-tRNA synthetase family. Phe-tRNA synthetase alpha subunit type 1 subfamily. As to quaternary structure, tetramer of two alpha and two beta subunits. The cofactor is Mg(2+).

The protein localises to the cytoplasm. The catalysed reaction is tRNA(Phe) + L-phenylalanine + ATP = L-phenylalanyl-tRNA(Phe) + AMP + diphosphate + H(+). This is Phenylalanine--tRNA ligase alpha subunit from Tolumonas auensis (strain DSM 9187 / NBRC 110442 / TA 4).